Consider the following 484-residue polypeptide: Protein nucleotidyltransferase YdiU (484 aa).

Positions 92, 94, 95, 115, 127, 128, 178, and 185 each coordinate ATP. Aspartate 258 acts as the Proton acceptor in catalysis. The Mg(2+) site is built by asparagine 259 and aspartate 268. Aspartate 268 serves as a coordination point for ATP.

It belongs to the SELO family. The cofactor is Mg(2+). Mn(2+) is required as a cofactor.

The enzyme catalyses L-seryl-[protein] + ATP = 3-O-(5'-adenylyl)-L-seryl-[protein] + diphosphate. It carries out the reaction L-threonyl-[protein] + ATP = 3-O-(5'-adenylyl)-L-threonyl-[protein] + diphosphate. The catalysed reaction is L-tyrosyl-[protein] + ATP = O-(5'-adenylyl)-L-tyrosyl-[protein] + diphosphate. It catalyses the reaction L-histidyl-[protein] + UTP = N(tele)-(5'-uridylyl)-L-histidyl-[protein] + diphosphate. The enzyme catalyses L-seryl-[protein] + UTP = O-(5'-uridylyl)-L-seryl-[protein] + diphosphate. It carries out the reaction L-tyrosyl-[protein] + UTP = O-(5'-uridylyl)-L-tyrosyl-[protein] + diphosphate. Nucleotidyltransferase involved in the post-translational modification of proteins. It can catalyze the addition of adenosine monophosphate (AMP) or uridine monophosphate (UMP) to a protein, resulting in modifications known as AMPylation and UMPylation. The chain is Protein nucleotidyltransferase YdiU from Mycolicibacterium smegmatis (strain ATCC 700084 / mc(2)155) (Mycobacterium smegmatis).